The following is a 520-amino-acid chain: 4-hydroxyphenylacetate 3-monooxygenase oxygenase component (520 aa).

FAD contacts are provided by residues 155-157 (HAI) and threonine 196.

This sequence belongs to the FADH(2)-utilizing monooxygenase family. Homodimer. HPA 3-hydroxylase consists of a reductase component HpaC and an oxygenase component HpaB. Some form of interactions between the reductase and the oxygenase facilitate the transfer of FADH(-) to the oxygenase in P.aeruginosa, although interactions are not required in other species.

It carries out the reaction 4-hydroxyphenylacetate + FADH2 + O2 = 3,4-dihydroxyphenylacetate + FAD + H2O + H(+). The protein operates within aromatic compound metabolism; 4-hydroxyphenylacetate degradation; pyruvate and succinate semialdehyde from 4-hydroxyphenylacetate: step 1/7. Functionally, oxygenase component of the 4-hydroxyphenylacetate (HPA) 3-hydroxylase. Catalyzes the hydroxylation of 4-hydroxyphenylacetate to form 3,4-dihydroxyphenylacetate, using FADH(-) provided by the reductase component HpaC to activate oxygen. To a lesser extent, can also use reduced FMN. In vitro, has hydroxylation activity toward tyrosol and various cinnamic acid derivatives, catalyzing the hydroxylation of p-coumaric acid, caffeic acid, ferulic acid, and coniferaldehyde. The protein is 4-hydroxyphenylacetate 3-monooxygenase oxygenase component of Pseudomonas aeruginosa (strain ATCC 15692 / DSM 22644 / CIP 104116 / JCM 14847 / LMG 12228 / 1C / PRS 101 / PAO1).